A 657-amino-acid polypeptide reads, in one-letter code: Glycogen debranching enzyme (657 aa).

The Nucleophile role is filled by Asp336. The active-site Proton donor is Glu371. Residues 460–479 (ANGEENRDGTNNNYSNNHGK) form a disordered region.

This sequence belongs to the glycosyl hydrolase 13 family.

The catalysed reaction is Hydrolysis of (1-&gt;6)-alpha-D-glucosidic linkages to branches with degrees of polymerization of three or four glucose residues in limit dextrin.. It participates in glycan degradation; glycogen degradation. Removes maltotriose and maltotetraose chains that are attached by 1,6-alpha-linkage to the limit dextrin main chain, generating a debranched limit dextrin. The polypeptide is Glycogen debranching enzyme (Escherichia coli O1:K1 / APEC).